The primary structure comprises 302 residues: Uroporphyrinogen-III synthase, chloroplastic (302 aa).

Residues 1–39 (MALSSSSHLLPFSRPPATFPRARHAGGGRGRAGATGRFI) are disordered. The N-terminal 50 residues, 1–50 (MALSSSSHLLPFSRPPATFPRARHAGGGRGRAGATGRFIACSSPPPPDVV), are a transit peptide targeting the chloroplast.

It belongs to the uroporphyrinogen-III synthase family.

It is found in the plastid. Its subcellular location is the chloroplast. The catalysed reaction is hydroxymethylbilane = uroporphyrinogen III + H2O. It participates in porphyrin-containing compound metabolism; protoporphyrin-IX biosynthesis; coproporphyrinogen-III from 5-aminolevulinate: step 3/4. In terms of biological role, catalyzes cyclization of the linear tetrapyrrole, hydroxymethylbilane, to the macrocyclic uroporphyrinogen III, a precursor of tetrapyrroles such as chlorophyll, heme and phycobilins. The sequence is that of Uroporphyrinogen-III synthase, chloroplastic (UROS) from Oryza sativa subsp. japonica (Rice).